The sequence spans 332 residues: Torsin-1A (332 aa).

Residues 1-20 (MKLGRAVLGLLLLAPSVVQA) form the signal peptide. The tract at residues 91 to 251 (KPKKPLTLSL…VSVFNNKNSG (161 aa)) is interaction with SNAPIN. 102–109 (GWTGTGKN) is a binding site for ATP. Residues Asn143 and Asn158 are each glycosylated (N-linked (GlcNAc...) (high mannose) asparagine). The tract at residues 251-332 (GFWHSSLIDR…FTKLDYYYDD (82 aa)) is interaction with KLC1. Residues 312–332 (RVFSDKGCKTVFTKLDYYYDD) are interaction with SYNE3.

It belongs to the ClpA/ClpB family. Torsin subfamily. Homohexamer. Interacts with TOR1B; the interaction may be specific of neural tissues. Interacts (ATP-bound) with TOR1AIP1 and TOR1AIP2; the interactions induce ATPase activity. Interacts with KLHL14; preferentially when ATP-free. Interacts with KLC1 (via TPR repeats); the interaction associates TOR1A with the kinesin oligomeric complex. Interacts with COPS4; the interaction associates TOR1A with the CSN complex. Interacts with SNAPIN; the interaction is direct and associates SNAPIN with the CSN complex. Interacts with STON2. Interacts (ATP-bound) with SYNE3 (via KASH domain); the interaction is required for SYNE3 nuclear envelope localization. Interacts with VIM; the interaction associates TOR1A with the cytoskeleton. Interacts with PLEC. Interacts (ATP-bound) with SLC6A3; regulates SLC6A3 transport to the plasma membrane. In terms of processing, N-glycosylated. Widely expressed. Highest levels in kidney and liver. In the brain, high levels found in the dopaminergic neurons of the substantia nigra pars compacta, as well as in the neocortex, hippocampus and cerebellum. Also highly expressed in the spinal cord.

The protein localises to the endoplasmic reticulum lumen. It localises to the nucleus membrane. It is found in the cell projection. Its subcellular location is the growth cone. The protein resides in the cytoplasmic vesicle membrane. The protein localises to the cytoplasmic vesicle. It localises to the secretory vesicle. It is found in the synaptic vesicle. Its subcellular location is the cytoplasm. The protein resides in the cytoskeleton. The catalysed reaction is ATP + H2O = ADP + phosphate + H(+). Functionally, protein with chaperone functions important for the control of protein folding, processing, stability and localization as well as for the reduction of misfolded protein aggregates. Involved in the regulation of synaptic vesicle recycling, controls STON2 protein stability in collaboration with the COP9 signalosome complex (CSN). In the nucleus, may link the cytoskeleton with the nuclear envelope, this mechanism seems to be crucial for the control of nuclear polarity, cell movement and, specifically in neurons, nuclear envelope integrity. Participates in the cellular trafficking and may regulate the subcellular location of multipass membrane proteins such as the dopamine transporter SLC6A3, leading to the modulation of dopamine neurotransmission. In the endoplasmic reticulum, plays a role in the quality control of protein folding by increasing clearance of misfolded proteins such as SGCE variants or holding them in an intermediate state for proper refolding. May have a redundant function with TOR1B in non-neural tissues. In Homo sapiens (Human), this protein is Torsin-1A (TOR1A).